The following is a 610-amino-acid chain: All-trans-retinol 13,14-reductase (610 aa).

The N-terminal stretch at 1-18 (MWLPLVLFLAVLLLAVVC) is a signal peptide.

The protein belongs to the carotenoid/retinoid oxidoreductase family. CrtISO subfamily. The cofactor is NAD(+). It depends on NADP(+) as a cofactor. FAD is required as a cofactor.

Its subcellular location is the endoplasmic reticulum membrane. It carries out the reaction all-trans-13,14-dihydroretinol + A = all-trans-retinol + AH2. In terms of biological role, catalyzes the saturation of all-trans-retinol to all-trans-13,14-dihydroretinol. Does not exhibit any activity toward all-trans-retinoic acid, nor 9-cis, 11-cis or 13-cis-retinol isomers. May play a role in the metabolism of vitamin A. Independently of retinol conversion, may regulate liver metabolism upstream of MLXIPL/ChREBP. May play a role in adipocyte differentiation. In Macaca fascicularis (Crab-eating macaque), this protein is All-trans-retinol 13,14-reductase (RETSAT).